We begin with the raw amino-acid sequence, 210 residues long: Redox-sensing transcriptional repressor Rex (210 aa).

The H-T-H motif DNA-binding region spans Ser-17 to Thr-56. Residue Gly-91–Gly-96 participates in NAD(+) binding.

This sequence belongs to the transcriptional regulatory Rex family. As to quaternary structure, homodimer.

The protein localises to the cytoplasm. In terms of biological role, modulates transcription in response to changes in cellular NADH/NAD(+) redox state. This chain is Redox-sensing transcriptional repressor Rex, found in Treponema denticola (strain ATCC 35405 / DSM 14222 / CIP 103919 / JCM 8153 / KCTC 15104).